The sequence spans 1235 residues: Serine/threonine-protein kinase TAO2 (1235 aa).

S9 is modified (phosphoserine). The Protein kinase domain maps to 28–281 (FSDLREIGHG…SEVLLKHRFV (254 aa)). Residues 34-42 (IGHGSFGAV) and K57 contribute to the ATP site. Residue 106-108 (EYC) coordinates staurosporine. Residue D151 is the Proton acceptor of the active site. G155 is a staurosporine binding site. Residue S181 is modified to Phosphoserine. The interval 318–457 (QEAPNGPGAE…PTSTSSSSAR (140 aa)) is disordered. A compositionally biased stretch (low complexity) spans 350–374 (SSHSVPSMSISASSQSSSVNSLADA). Residues 375-395 (SDNEEEEEEEEEEEEEEEEEG) show a composition bias toward acidic residues. Residues 396 to 411 (PESREMAMMQEGEHTV) show a composition bias toward basic and acidic residues. A Phosphoserine modification is found at S416. 2 coiled-coil regions span residues 488-523 (SALREQLSGYKRMRRQHQKQLLALESRLRGEREEHS) and 576-603 (KELAALLEAQKRTYKLRKEQLKEELQEN). The residue at position 658 (S658) is a Phosphoserine. Positions 683–715 (LRQHEATRELELRQLQAVQRTRAELTRLQHQTE) form a coiled coil. A phosphoserine mark is found at S777, S825, and S827. The tract at residues 892 to 941 (GPVLTPVPEEEEEEEEEGGAPIGTPRDPGDGCPSPDIPPEPPPSHLRQYP) is disordered. Residues 899 to 909 (PEEEEEEEEEG) show a composition bias toward acidic residues. Residues 926–935 (PDIPPEPPPS) are compositionally biased toward pro residues. Helical transmembrane passes span 967–987 (LLPLLLLLLLPLLAAQGGGGL), 989–1009 (AALLALEVGLVGLGASYLFLC), and 1014–1034 (LPPSLFLLLAQGTALGAVLSL). The residue at position 1038 (R1038) is a Phosphoserine. The next 2 membrane-spanning stretches (helical) occupy residues 1040-1060 (LMGVPLGLGAAWLLAWPSLAL) and 1170-1190 (LASCLPPWAVHILASWGLLKG). The interval 1210–1235 (SASRQLPPGTVAGRRSQTRRALPPWR) is disordered.

It belongs to the protein kinase superfamily. STE Ser/Thr protein kinase family. STE20 subfamily. In terms of assembly, self-associates. Interacts with MAP2K3 and MAP2K6. Interacts with tubulins. Interacts with MAP3K7 and interferes with MAP3K7-binding to CHUK and thus prevents NF-kappa-B activation. Isoform 2 interacts with PCDH8; this complex may also include CDH2. The cofactor is Mg(2+). In terms of processing, autophosphorylated. Phosphorylated by ATM. Post-translationally, phosphorylated on Ser-1038 by MAPK14. This phosphorylation is required PCDH8 for endocytosis.

The protein resides in the cytoplasmic vesicle membrane. It localises to the cytoplasm. It is found in the cytoskeleton. The protein localises to the cell projection. Its subcellular location is the dendrite. It catalyses the reaction L-seryl-[protein] + ATP = O-phospho-L-seryl-[protein] + ADP + H(+). It carries out the reaction L-threonyl-[protein] + ATP = O-phospho-L-threonyl-[protein] + ADP + H(+). With respect to regulation, moderately inhibited by staurosporine, a broad-range protein kinase inhibitor. Functionally, serine/threonine-protein kinase involved in different processes such as membrane blebbing and apoptotic bodies formation DNA damage response and MAPK14/p38 MAPK stress-activated MAPK cascade. Phosphorylates itself, MBP, activated MAPK8, MAP2K3, MAP2K6 and tubulins. Activates the MAPK14/p38 MAPK signaling pathway through the specific activation and phosphorylation of the upstream MAP2K3 and MAP2K6 kinases. In response to DNA damage, involved in the G2/M transition DNA damage checkpoint by activating the p38/MAPK14 stress-activated MAPK cascade, probably by mediating phosphorylation of upstream MAP2K3 and MAP2K6 kinases. May affect microtubule organization and stability. May play a role in the osmotic stress-MAPK8 pathway. Prevents MAP3K7-mediated activation of CHUK, and thus NF-kappa-B activation. Isoform 2, but not isoform 1, is required for PCDH8 endocytosis. Following homophilic interactions between PCDH8 extracellular domains, isoform 2 phosphorylates and activates MAPK14/p38 MAPK which in turn phosphorylates isoform 2. This process leads to PCDH8 endocytosis and CDH2 cointernalization. Both isoforms are involved in MAPK14/p38 MAPK activation. The polypeptide is Serine/threonine-protein kinase TAO2 (Taok2) (Rattus norvegicus (Rat)).